The primary structure comprises 199 residues: Nucleoside triphosphate pyrophosphatase (199 aa).

Asp-76 (proton acceptor) is an active-site residue.

This sequence belongs to the Maf family. It depends on a divalent metal cation as a cofactor.

The protein resides in the cytoplasm. It carries out the reaction a ribonucleoside 5'-triphosphate + H2O = a ribonucleoside 5'-phosphate + diphosphate + H(+). The enzyme catalyses a 2'-deoxyribonucleoside 5'-triphosphate + H2O = a 2'-deoxyribonucleoside 5'-phosphate + diphosphate + H(+). In terms of biological role, nucleoside triphosphate pyrophosphatase. May have a dual role in cell division arrest and in preventing the incorporation of modified nucleotides into cellular nucleic acids. This Ruegeria sp. (strain TM1040) (Silicibacter sp.) protein is Nucleoside triphosphate pyrophosphatase.